Consider the following 80-residue polypeptide: Cell division protein ZapB (80 aa).

A coiled-coil region spans residues 3–80 (FEVFEKLEAK…ALLGKMEDVQ (78 aa)).

This sequence belongs to the ZapB family. As to quaternary structure, homodimer. The ends of the coiled-coil dimer bind to each other, forming polymers. Interacts with FtsZ.

The protein resides in the cytoplasm. In terms of biological role, non-essential, abundant cell division factor that is required for proper Z-ring formation. It is recruited early to the divisome by direct interaction with FtsZ, stimulating Z-ring assembly and thereby promoting cell division earlier in the cell cycle. Its recruitment to the Z-ring requires functional FtsA or ZipA. The polypeptide is Cell division protein ZapB (Photorhabdus laumondii subsp. laumondii (strain DSM 15139 / CIP 105565 / TT01) (Photorhabdus luminescens subsp. laumondii)).